Consider the following 347-residue polypeptide: NADH-ubiquinone oxidoreductase chain 2 (347 aa).

Transmembrane regions (helical) follow at residues 1–21 (MNPL…SIIL), 25–45 (HWFM…PVLM), 59–79 (YFLT…INLM), 96–116 (LLIT…FWVP), 122–142 (VSLQ…LAVM), 145–165 (IFAS…IMIG), 178–198 (IMAY…IYNP), 200–220 (LMLL…MMFM), 242–262 (VLMM…GFMP), 274–294 (NSVI…FFYM), and 325–345 (LLAP…MFIL).

Belongs to the complex I subunit 2 family. In terms of assembly, core subunit of respiratory chain NADH dehydrogenase (Complex I) which is composed of 45 different subunits. Interacts with TMEM242.

It is found in the mitochondrion inner membrane. The enzyme catalyses a ubiquinone + NADH + 5 H(+)(in) = a ubiquinol + NAD(+) + 4 H(+)(out). In terms of biological role, core subunit of the mitochondrial membrane respiratory chain NADH dehydrogenase (Complex I) which catalyzes electron transfer from NADH through the respiratory chain, using ubiquinone as an electron acceptor. Essential for the catalytic activity and assembly of complex I. This chain is NADH-ubiquinone oxidoreductase chain 2, found in Myosorex kihaulei (Kihaule's mouse shrew).